The chain runs to 226 residues: UPF0758 protein SUB0843 (226 aa).

Residues 103–225 (QILSSYQVAK…YYSFREKSDI (123 aa)) enclose the MPN domain. 3 residues coordinate Zn(2+): H174, H176, and D187. The short motif at 174–187 (HNHPSGLTNPSEND) is the JAMM motif element.

Belongs to the UPF0758 family.

The polypeptide is UPF0758 protein SUB0843 (Streptococcus uberis (strain ATCC BAA-854 / 0140J)).